Reading from the N-terminus, the 593-residue chain is Aspartate--tRNA ligase (593 aa).

Glutamate 180 is a binding site for L-aspartate. Residues 204-207 form an aspartate region; that stretch reads QIFK. Residue arginine 226 participates in L-aspartate binding. Residues 226–228 and glutamine 235 each bind ATP; that span reads RDE. Histidine 453 is a binding site for L-aspartate. Glutamate 487 contributes to the ATP binding site. Arginine 494 lines the L-aspartate pocket. Residue 539–542 coordinates ATP; the sequence is GLDR.

Belongs to the class-II aminoacyl-tRNA synthetase family. Type 1 subfamily. In terms of assembly, homodimer.

The protein localises to the cytoplasm. The catalysed reaction is tRNA(Asp) + L-aspartate + ATP = L-aspartyl-tRNA(Asp) + AMP + diphosphate. Its function is as follows. Catalyzes the attachment of L-aspartate to tRNA(Asp) in a two-step reaction: L-aspartate is first activated by ATP to form Asp-AMP and then transferred to the acceptor end of tRNA(Asp). In Clostridium botulinum (strain Kyoto / Type A2), this protein is Aspartate--tRNA ligase.